The following is a 222-amino-acid chain: MKIAIDGPSASGKSTVAKIISQKLNIPYLETGLVYRTYAYVSLKFKVPIQDIDKLFSLPVKVVPKIGKTEVYIEGKPVNEEDLRSEEVGKRASELGSIPEFRERINKLFKEIINNKQMVVEGRDAGTHIIPEAPVKVFITASPEERAKRRYEQLKELGYEVSFEEILQKILERDKRDMERPKYPFKPAEDAVIIDTTRKSVEEVVEEVLKIIHERSQSAELI.

Residue 7-15 (GPSASGKST) participates in ATP binding.

It belongs to the cytidylate kinase family. Type 1 subfamily.

The protein localises to the cytoplasm. The enzyme catalyses CMP + ATP = CDP + ADP. It catalyses the reaction dCMP + ATP = dCDP + ADP. The protein is Cytidylate kinase of Aquifex aeolicus (strain VF5).